Consider the following 255-residue polypeptide: tRNA (guanine-N(1)-)-methyltransferase (255 aa).

Residues glycine 113 and 133-138 contribute to the S-adenosyl-L-methionine site; that span reads IGDYVL.

The protein belongs to the RNA methyltransferase TrmD family. Homodimer.

It is found in the cytoplasm. The enzyme catalyses guanosine(37) in tRNA + S-adenosyl-L-methionine = N(1)-methylguanosine(37) in tRNA + S-adenosyl-L-homocysteine + H(+). Functionally, specifically methylates guanosine-37 in various tRNAs. This is tRNA (guanine-N(1)-)-methyltransferase from Klebsiella pneumoniae subsp. pneumoniae (strain ATCC 700721 / MGH 78578).